The sequence spans 239 residues: Large ribosomal subunit protein uL2 (239 aa).

Residues 200 to 239 (VNHPHGGKEHHIGRPSTVSRRAPPGRKVGHIAARRTGRRK) form a disordered region. The span at 222–239 (PPGRKVGHIAARRTGRRK) shows a compositional bias: basic residues.

This sequence belongs to the universal ribosomal protein uL2 family. In terms of assembly, part of the 50S ribosomal subunit. Forms a bridge to the 30S subunit in the 70S ribosome.

Its function is as follows. One of the primary rRNA binding proteins. Required for association of the 30S and 50S subunits to form the 70S ribosome, for tRNA binding and peptide bond formation. It has been suggested to have peptidyltransferase activity; this is somewhat controversial. Makes several contacts with the 16S rRNA in the 70S ribosome. The protein is Large ribosomal subunit protein uL2 of Thermococcus gammatolerans (strain DSM 15229 / JCM 11827 / EJ3).